Consider the following 325-residue polypeptide: Replication factor C small subunit (325 aa).

44–51 lines the ATP pocket; that stretch reads GPPGTGKT.

It belongs to the activator 1 small subunits family. RfcS subfamily. In terms of assembly, heteromultimer composed of small subunits (RfcS) and large subunits (RfcL).

Its function is as follows. Part of the RFC clamp loader complex which loads the PCNA sliding clamp onto DNA. The sequence is that of Replication factor C small subunit from Thermofilum pendens (strain DSM 2475 / Hrk 5).